Here is a 509-residue protein sequence, read N- to C-terminus: MEAIISFAGIGINYKKLQSKLQHDFGRLLKALTVTARALPGQPKHIAIRQETAFTLQGEYIYFPILLRKQFEMFNMVYTTRPVSLRALPCVETEFPLFNYQQEMVDKIHKKLLSPYGRFYLHLNTGLGKTRIAISIIQKLLYPTLVIVPTKAIQIQWIDELTLLLPHLRVAAYNNAACKKKDMTSKEYDVIVGIINTLRKKPEQFFEPFGLVVLDEAHELHSPENYKIFWKIQLSRILGLSATPLDRPDGMDKIIIHHLGQPQRTVSPTTTFSGYVREIEYQGHPDFVSPVCINEKVSAIATIDKLLQDPSRIQLVVNEAKRLYSLHTAEPHKWGTDEPYGIIIFVEFRKLLEIFYQALSKEFKDVQIVVPEVALLCGGVSNTALSQAHSASIILLTYGYGRRGISFKHMTSIIMATPRRNNMEQILGRITRQGSDEKKVRIVVDIKDTLSPLSSQVYDRHRIYKKKGYPIFKCSASYQQPYSSNEVLIWDPYNESCLACTTTPPSPSK.

In terms of domain architecture, Helicase ATP-binding spans 110–262 (KKLLSPYGRF…KIIIHHLGQP (153 aa)). Residue 123-130 (LNTGLGKT) participates in ATP binding. The short motif at 215-218 (DEAH) is the DEAH box element.

It belongs to the DEAD box helicase family. DEAH subfamily.

It carries out the reaction ATP + H2O = ADP + phosphate + H(+). This is Putative ATP-dependent RNA helicase QP509L from African swine fever virus (strain Badajoz 1971 Vero-adapted) (Ba71V).